A 695-amino-acid polypeptide reads, in one-letter code: Probable glucan endo-1,3-beta-glucosidase btgC (695 aa).

Disordered regions lie at residues 1–53 (MSGP…THHG), 117–140 (RRGT…GSDN), 175–258 (GPAG…RSQA), and 286–314 (ETSY…STGS). At 1–317 (MSGPHRTFSF…PKPSTGSRKR (317 aa)) the chain is on the cytoplasmic side. Positions 36 to 45 (PISNMSSSPG) are enriched in polar residues. Residues 188 to 198 (HLGTSNSSQRN) show a composition bias toward polar residues. Residues 231–241 (NPEEIADDGDD) show a composition bias toward acidic residues. A helical; Signal-anchor for type II membrane protein membrane pass occupies residues 318–338 (GWIIGAILAVIIIGAIVGGAV). The Extracellular portion of the chain corresponds to 339-695 (GGTIGHKDSG…IPDCGGKTAA (357 aa)). The tract at residues 346–372 (DSGDSASGSSASTQSASGDTDTNGDLD) is disordered. The segment covering 349-366 (DSASGSSASTQSASGDTD) has biased composition (low complexity). Asn415, Asn438, and Asn466 each carry an N-linked (GlcNAc...) asparagine glycan. The active-site Proton donor is the Glu498. Catalysis depends on Glu597, which acts as the Nucleophile. N-linked (GlcNAc...) asparagine glycosylation occurs at Asn642.

The protein belongs to the glycosyl hydrolase 17 family.

Its subcellular location is the cell membrane. The enzyme catalyses Hydrolysis of (1-&gt;3)-beta-D-glucosidic linkages in (1-&gt;3)-beta-D-glucans.. Its function is as follows. Glucanases play a role in cell expansion during growth, in cell-cell fusion during mating, and in spore release during sporulation. This enzyme may be involved in beta-glucan degradation. Active on laminarin and lichenan. The sequence is that of Probable glucan endo-1,3-beta-glucosidase btgC (btgC) from Aspergillus clavatus (strain ATCC 1007 / CBS 513.65 / DSM 816 / NCTC 3887 / NRRL 1 / QM 1276 / 107).